Reading from the N-terminus, the 721-residue chain is YTH domain-containing protein 1 (721 aa).

Positions 29–38 (EADIAEELQD) are enriched in acidic residues. The tract at residues 29–239 (EADIAEELQD…GGGTHSHSQK (211 aa)) is disordered. Over residues 48 to 75 (SESNGGDSSDSEPSISSVSTATSSLAGS) the composition is skewed to low complexity. The segment covering 135–151 (ASDKVKSKSPDTEDRQP) has biased composition (basic and acidic residues). In terms of domain architecture, YTH spans 254–391 (TRFFLIKSNN…KIGGELCRLF (138 aa)). RNA is bound by residues 260-262 (KSN), Trp-276, and Trp-327. 3 disordered regions span residues 424 to 471 (PPRS…RHHH), 580 to 605 (DGPG…DKAP), and 651 to 721 (AGGG…DNRR). Gly residues predominate over residues 432–443 (GHGGGGRGGGRG). Residues 451 to 471 (PMRHKRSYHGAPHHRPYRHHH) show a composition bias toward basic residues. The segment covering 583–600 (GAPPLPDYPPPQRPPPPG) has biased composition (pro residues). A compositionally biased stretch (gly residues) spans 651-670 (AGGGMGAGGGSGGGMGGPGG). The segment covering 699-708 (RDSRPFRERG) has biased composition (basic and acidic residues).

Its subcellular location is the nucleus. Its function is as follows. Regulator of alternative splicing that specifically recognizes and binds N6-methyladenosine (m6A)-containing RNAs. Acts by acting as a reader of m6A methylation. Required for sex determination and dosage compensation via Sxl alternative splicing: m6A methylation acts as a key regulator of Sxl pre-mRNA and promotes female-specific alternative splicing of Sxl, which determines female physiognomy. M6A methylation is also required for neuronal functions. In Drosophila melanogaster (Fruit fly), this protein is YTH domain-containing protein 1.